Here is a 150-residue protein sequence, read N- to C-terminus: Translation machinery-associated protein 17 (150 aa).

A phosphoserine mark is found at serine 24 and serine 68. The tract at residues arginine 110–asparagine 139 is disordered. Basic and acidic residues predominate over residues lysine 118 to threonine 127.

As to quaternary structure, interacts with RPT6. Interacts with the 40S and 60S ribosomal subunits.

The protein resides in the cytoplasm. The protein localises to the nucleus. Functionally, ATPase-dedicated chaperone that assists the formation of the RPT6-RPT3 ATPase pair, an early step in proteasome assembly. Plays a key role in maintaining homeostatic proteasome levels and adjusting proteasome assembly when demands increase, such as during proteasome stresses. Function overlaps with RPN14. The chain is Translation machinery-associated protein 17 (TMA17) from Saccharomyces cerevisiae (strain ATCC 204508 / S288c) (Baker's yeast).